We begin with the raw amino-acid sequence, 1030 residues long: MMS19 nucleotide excision repair protein homolog (1030 aa).

Residue alanine 2 is modified to N-acetylalanine. HEAT repeat units lie at residues 866–904 (QRFF…RLPK), 908–946 (LPEL…EAPQ), 949–987 (SLHV…LPTP), and 990–1028 (LPYK…LGSP). Serine 1027 carries the post-translational modification Phosphoserine.

It belongs to the MET18/MMS19 family. In terms of assembly, component of the CIA complex. In the CIA complex, interacts directly with CIAO2B and CIAO3. Component of the MMXD complex, composed of CIAO1, ERCC2, CIAO2B, MMS19 and SLC25A5. Interacts with CIAO2B; the interaction is direct. Interacts with ERCC2/XPD; the interaction is direct. Interacts with ERCC3/XPB and NCOA3/RAC3. Interacts with RTEL1; the interaction mediates the association of RTEL1 with the CIA complex. Interacts with BRIP1. Interacts with KIF4A; the interaction facilitates the transfer of Fe-S clusters to KIF4A to ensure proper localization of KIF4A to the mitotic machinery components. Interacts with CCDC117; the interaction is indirect. Post-translationally, ubiquitinated; undergoes 'Lys-48'-linked polyubiquitination.

It localises to the nucleus. The protein resides in the cytoplasm. The protein localises to the cytoskeleton. It is found in the spindle. In terms of biological role, key component of the cytosolic iron-sulfur protein assembly (CIA) complex, a multiprotein complex that mediates the incorporation of iron-sulfur cluster into apoproteins specifically involved in DNA metabolism and genomic integrity. In the CIA complex, MMS19 acts as an adapter between early-acting CIA components and a subset of cellular target Fe/S proteins such as ERCC2/XPD, FANCJ and RTEL1, thereby playing a key role in nucleotide excision repair (NER), homologous recombination-mediated double-strand break DNA repair, DNA replication and RNA polymerase II (POL II) transcription. As a CIA complex component and in collaboration with CIAO1 and CIAO2, binds to and facilitates the assembly of most cytosolic-nuclear Fe/S proteins. As part of the mitotic spindle-associated MMXD complex, plays a role in chromosome segregation, probably by facilitating iron-sulfur cluster assembly into ERCC2/XPD. Together with CIAO2, facilitates the transfer of Fe-S clusters to the motor protein KIF4A, which ensures proper localization of KIF4A to mitotic machinery components to promote the progression of mitosis. Indirectly acts as a transcriptional coactivator of estrogen receptor (ER), via its role in iron-sulfur insertion into some component of the TFIIH-machinery. The polypeptide is MMS19 nucleotide excision repair protein homolog (Bos taurus (Bovine)).